Reading from the N-terminus, the 156-residue chain is 6,7-dimethyl-8-ribityllumazine synthase (156 aa).

5-amino-6-(D-ribitylamino)uracil-binding positions include tryptophan 33, 64–66 (SVE), and 86–88 (VIL). 91-92 (ET) provides a ligand contact to (2S)-2-hydroxy-3-oxobutyl phosphate. The active-site Proton donor is the histidine 94. 5-amino-6-(D-ribitylamino)uracil is bound at residue isoleucine 119. Arginine 133 provides a ligand contact to (2S)-2-hydroxy-3-oxobutyl phosphate.

This sequence belongs to the DMRL synthase family.

It carries out the reaction (2S)-2-hydroxy-3-oxobutyl phosphate + 5-amino-6-(D-ribitylamino)uracil = 6,7-dimethyl-8-(1-D-ribityl)lumazine + phosphate + 2 H2O + H(+). It functions in the pathway cofactor biosynthesis; riboflavin biosynthesis; riboflavin from 2-hydroxy-3-oxobutyl phosphate and 5-amino-6-(D-ribitylamino)uracil: step 1/2. Its function is as follows. Catalyzes the formation of 6,7-dimethyl-8-ribityllumazine by condensation of 5-amino-6-(D-ribitylamino)uracil with 3,4-dihydroxy-2-butanone 4-phosphate. This is the penultimate step in the biosynthesis of riboflavin. The polypeptide is 6,7-dimethyl-8-ribityllumazine synthase (Tropheryma whipplei (strain TW08/27) (Whipple's bacillus)).